A 904-amino-acid chain; its full sequence is HTH-type transcriptional regulator MalT (904 aa).

An ATP-binding site is contributed by C39–T46. Positions E832 to L897 constitute an HTH luxR-type domain. A DNA-binding region (H-T-H motif) is located at residues N856–R875.

Belongs to the MalT family. Monomer in solution. Oligomerizes to an active state in the presence of the positive effectors ATP and maltotriose.

Activated by ATP and maltotriose, which are both required for DNA binding. Functionally, positively regulates the transcription of the maltose regulon whose gene products are responsible for uptake and catabolism of malto-oligosaccharides. Specifically binds to the promoter region of its target genes, recognizing a short DNA motif called the MalT box. This chain is HTH-type transcriptional regulator MalT, found in Serratia proteamaculans (strain 568).